The following is a 331-amino-acid chain: Ketol-acid reductoisomerase (NADP(+)) (331 aa).

The region spanning A3–T183 is the KARI N-terminal Rossmann domain. NADP(+) is bound by residues Y26–Q29, S52, and S54. The active site involves H109. NADP(+) is bound at residue G135. A KARI C-terminal knotted domain is found at T184–L329. Residues D192, E196, E228, and E232 each contribute to the Mg(2+) site. A substrate-binding site is contributed by S253.

The protein belongs to the ketol-acid reductoisomerase family. Mg(2+) is required as a cofactor.

The enzyme catalyses (2R)-2,3-dihydroxy-3-methylbutanoate + NADP(+) = (2S)-2-acetolactate + NADPH + H(+). The catalysed reaction is (2R,3R)-2,3-dihydroxy-3-methylpentanoate + NADP(+) = (S)-2-ethyl-2-hydroxy-3-oxobutanoate + NADPH + H(+). It participates in amino-acid biosynthesis; L-isoleucine biosynthesis; L-isoleucine from 2-oxobutanoate: step 2/4. The protein operates within amino-acid biosynthesis; L-valine biosynthesis; L-valine from pyruvate: step 2/4. Functionally, involved in the biosynthesis of branched-chain amino acids (BCAA). Catalyzes an alkyl-migration followed by a ketol-acid reduction of (S)-2-acetolactate (S2AL) to yield (R)-2,3-dihydroxy-isovalerate. In the isomerase reaction, S2AL is rearranged via a Mg-dependent methyl migration to produce 3-hydroxy-3-methyl-2-ketobutyrate (HMKB). In the reductase reaction, this 2-ketoacid undergoes a metal-dependent reduction by NADPH to yield (R)-2,3-dihydroxy-isovalerate. In Thermobifida fusca (strain YX), this protein is Ketol-acid reductoisomerase (NADP(+)).